Here is a 130-residue protein sequence, read N- to C-terminus: MSATTLEILEKLKAITLLEATELVSQIEKTFGVDASAPAVSGLRPILVEPIKQEDIIEEKTTFDVILEEVPSDKRVPILKVIRALTSLDLKQAKESITDLPKTILQGVSKEESEAAKQQLEAVGGKIKVS.

It belongs to the bacterial ribosomal protein bL12 family. Homodimer. Part of the ribosomal stalk of the 50S ribosomal subunit. Forms a multimeric L10(L12)X complex, where L10 forms an elongated spine to which 2 to 4 L12 dimers bind in a sequential fashion. Binds GTP-bound translation factors.

The protein resides in the plastid. Its function is as follows. Forms part of the ribosomal stalk which helps the ribosome interact with GTP-bound translation factors. Is thus essential for accurate translation. The protein is Large ribosomal subunit protein bL12c of Prototheca wickerhamii.